Here is a 766-residue protein sequence, read N- to C-terminus: 5-methyltetrahydropteroyltriglutamate--homocysteine methyltransferase (766 aa).

Residues 16 to 19 (RELK) and K122 contribute to the 5-methyltetrahydropteroyltri-L-glutamate site. L-homocysteine-binding positions include 443 to 445 (IGS) and E496. Residues 443-445 (IGS) and E496 contribute to the L-methionine site. 5-methyltetrahydropteroyltri-L-glutamate-binding positions include 527 to 528 (RC) and W573. D611 contributes to the L-homocysteine binding site. D611 is a binding site for L-methionine. A 5-methyltetrahydropteroyltri-L-glutamate-binding site is contributed by E617. H653, C655, and E677 together coordinate Zn(2+). H706 acts as the Proton donor in catalysis. A Zn(2+)-binding site is contributed by C738.

This sequence belongs to the vitamin-B12 independent methionine synthase family. Zn(2+) is required as a cofactor.

The enzyme catalyses 5-methyltetrahydropteroyltri-L-glutamate + L-homocysteine = tetrahydropteroyltri-L-glutamate + L-methionine. It participates in amino-acid biosynthesis; L-methionine biosynthesis via de novo pathway; L-methionine from L-homocysteine (MetE route): step 1/1. Its function is as follows. Catalyzes the transfer of a methyl group from 5-methyltetrahydrofolate to homocysteine resulting in methionine formation. In Pseudomonas putida (strain W619), this protein is 5-methyltetrahydropteroyltriglutamate--homocysteine methyltransferase.